We begin with the raw amino-acid sequence, 200 residues long: LexA repressor (200 aa).

Positions 27 to 47 (VREICNAVELRSTSTVHGHLK) form a DNA-binding region, H-T-H motif. Residues serine 124 and lysine 161 each act as for autocatalytic cleavage activity in the active site.

Belongs to the peptidase S24 family. In terms of assembly, homodimer.

It catalyses the reaction Hydrolysis of Ala-|-Gly bond in repressor LexA.. Represses a number of genes involved in the response to DNA damage (SOS response), including recA and lexA. In the presence of single-stranded DNA, RecA interacts with LexA causing an autocatalytic cleavage which disrupts the DNA-binding part of LexA, leading to derepression of the SOS regulon and eventually DNA repair. In Clostridium tetani (strain Massachusetts / E88), this protein is LexA repressor.